We begin with the raw amino-acid sequence, 338 residues long: POU domain, class 4, transcription factor 3 (338 aa).

The POU-IV box motif lies at 56–65 (RAEALAAVDI). Residues 179–256 (DVESDPRELE…VLQAWLEEAE (78 aa)) form the POU-specific domain. A DNA-binding region (homeobox) is located at residues 274 to 333 (RKRKRTSIAAPEKRSLEAYFAIQPRPSSEKIAAIAEKLDLKKNVVRVWFCNQRQKQKRMK).

Belongs to the POU transcription factor family. Class-4 subfamily. As to quaternary structure, interacts with ISL1. As to expression, brain.

Its subcellular location is the nucleus. The protein localises to the cytoplasm. Its function is as follows. Acts as a transcriptional activator. Acts by binding to sequences related to the consensus octamer motif 5'-ATGCAAAT-3' in the regulatory regions of its target genes. Involved in the auditory system development, required for terminal differentiation of hair cells in the inner ear. This is POU domain, class 4, transcription factor 3 from Mus musculus (Mouse).